The sequence spans 360 residues: Phenylalanine--tRNA ligase alpha subunit (360 aa).

Residue Glu-260 coordinates Mg(2+).

Belongs to the class-II aminoacyl-tRNA synthetase family. Phe-tRNA synthetase alpha subunit type 1 subfamily. As to quaternary structure, tetramer of two alpha and two beta subunits. It depends on Mg(2+) as a cofactor.

It localises to the cytoplasm. It catalyses the reaction tRNA(Phe) + L-phenylalanine + ATP = L-phenylalanyl-tRNA(Phe) + AMP + diphosphate + H(+). This Cereibacter sphaeroides (strain ATCC 17029 / ATH 2.4.9) (Rhodobacter sphaeroides) protein is Phenylalanine--tRNA ligase alpha subunit.